A 377-amino-acid chain; its full sequence is Phosphatidylserine decarboxylase proenzyme, mitochondrial (377 aa).

The N-terminal 34 residues, 1–34 (MMPLFNVLRSARMLPAVSKKVVSPPMMLRSVREL), are a transit peptide targeting the mitochondrion. Topologically, residues 35–61 (TNQSKNVYATKEVIIGASQKKKRSWVK) are mitochondrial matrix. The helical transmembrane segment at 62–80 (WLSVSTLIIGGASYVGYLF) threads the bilayer. Residues 81–377 (TPDWREIVDS…YGQSLVADGV (297 aa)) are Mitochondrial intermembrane-facing. Active-site charge relay system; for autoendoproteolytic cleavage activity residues include D181, H238, and S344. The Schiff-base intermediate with substrate; via pyruvic acid; for decarboxylase activity role is filled by S344. The residue at position 344 (S344) is a Pyruvic acid (Ser); by autocatalysis.

It belongs to the phosphatidylserine decarboxylase family. PSD-B subfamily. Eukaryotic type I sub-subfamily. Heterodimer of a large membrane-associated beta subunit and a small pyruvoyl-containing alpha subunit. Pyruvate serves as cofactor. Is synthesized initially as an inactive proenzyme. Formation of the active enzyme involves a self-maturation process in which the active site pyruvoyl group is generated from an internal serine residue via an autocatalytic post-translational modification. Two non-identical subunits are generated from the proenzyme in this reaction, and the pyruvate is formed at the N-terminus of the alpha chain, which is derived from the carboxyl end of the proenzyme. The autoendoproteolytic cleavage occurs by a canonical serine protease mechanism, in which the side chain hydroxyl group of the serine supplies its oxygen atom to form the C-terminus of the beta chain, while the remainder of the serine residue undergoes an oxidative deamination to produce ammonia and the pyruvoyl prosthetic group on the alpha chain. During this reaction, the Ser that is part of the protease active site of the proenzyme becomes the pyruvoyl prosthetic group, which constitutes an essential element of the active site of the mature decarboxylase.

It localises to the mitochondrion inner membrane. It carries out the reaction a 1,2-diacyl-sn-glycero-3-phospho-L-serine + H(+) = a 1,2-diacyl-sn-glycero-3-phosphoethanolamine + CO2. The protein operates within phospholipid metabolism; phosphatidylethanolamine biosynthesis; phosphatidylethanolamine from CDP-diacylglycerol: step 2/2. Functionally, catalyzes the formation of phosphatidylethanolamine (PtdEtn) from phosphatidylserine (PtdSer). Plays a central role in phospholipid metabolism and in the interorganelle trafficking of phosphatidylserine. This Caenorhabditis elegans protein is Phosphatidylserine decarboxylase proenzyme, mitochondrial.